The following is a 296-amino-acid chain: Transcription factor bHLH99 (296 aa).

One can recognise a bHLH domain in the interval 99 to 150 (NQRMNHIAVERNRRKQMNHFLSILKSMMPLSYSQPNDQASIIEGTISYLKKL).

In terms of assembly, homodimer. Expressed constitutively in roots, stems, and flowers.

Its subcellular location is the nucleus. This Arabidopsis thaliana (Mouse-ear cress) protein is Transcription factor bHLH99 (BHLH99).